Consider the following 209-residue polypeptide: ATP-dependent dethiobiotin synthetase BioD (209 aa).

13–18 (DVGKTV) is a binding site for ATP. A Mg(2+)-binding site is contributed by T17. K33 is an active-site residue. E100 serves as a coordination point for Mg(2+). Residues 100 to 103 (EGAG) and 184 to 186 (PRL) contribute to the ATP site.

It belongs to the dethiobiotin synthetase family. As to quaternary structure, homodimer. Requires Mg(2+) as cofactor.

It localises to the cytoplasm. The enzyme catalyses (7R,8S)-7,8-diammoniononanoate + CO2 + ATP = (4R,5S)-dethiobiotin + ADP + phosphate + 3 H(+). Its pathway is cofactor biosynthesis; biotin biosynthesis; biotin from 7,8-diaminononanoate: step 1/2. Catalyzes a mechanistically unusual reaction, the ATP-dependent insertion of CO2 between the N7 and N8 nitrogen atoms of 7,8-diaminopelargonic acid (DAPA, also called 7,8-diammoniononanoate) to form a ureido ring. The chain is ATP-dependent dethiobiotin synthetase BioD from Rhizorhabdus wittichii (strain DSM 6014 / CCUG 31198 / JCM 15750 / NBRC 105917 / EY 4224 / RW1) (Sphingomonas wittichii).